The chain runs to 205 residues: DNA-directed RNA polymerase RPB5 homolog (205 aa).

This sequence belongs to the archaeal RpoH/eukaryotic RPB5 RNA polymerase subunit family. In terms of assembly, part of the viral DNA-directed RNA polymerase that consists of 8 polII-like subunits (RPB1, RPB2, RPB3, RPB5, RPB6, RPB7, RPB9, RPB10), a capping enzyme and a termination factor.

It localises to the host cytoplasm. The protein localises to the virion. Its function is as follows. Component of the DNA-directed RNA polymerase (RNAP) that catalyzes the transcription in the cytoplasm of viral DNA into RNA using the four ribonucleoside triphosphates as substrates. This is DNA-directed RNA polymerase RPB5 homolog from Ornithodoros (relapsing fever ticks).